The chain runs to 134 residues: Transcription antitermination protein NusB (134 aa).

The protein belongs to the NusB family.

In terms of biological role, involved in transcription antitermination. Required for transcription of ribosomal RNA (rRNA) genes. Binds specifically to the boxA antiterminator sequence of the ribosomal RNA (rrn) operons. The chain is Transcription antitermination protein NusB from Shewanella sediminis (strain HAW-EB3).